Reading from the N-terminus, the 190-residue chain is Recombination protein RecR (190 aa).

The segment at 58-73 (CEQCGALSENELCEIC) adopts a C4-type zinc-finger fold. The 87-residue stretch at 81-167 (NILCIVESPK…TFSKIAQGIP (87 aa)) folds into the Toprim domain.

Belongs to the RecR family.

Its function is as follows. May play a role in DNA repair. It seems to be involved in an RecBC-independent recombinational process of DNA repair. It may act with RecF and RecO. The chain is Recombination protein RecR from Campylobacter jejuni subsp. doylei (strain ATCC BAA-1458 / RM4099 / 269.97).